A 341-amino-acid chain; its full sequence is Basic membrane protein B (341 aa).

Residues 1-14 form the signal peptide; sequence MRIVIFIFGILLTS. C15 carries the N-palmitoyl cysteine lipid modification. C15 is lipidated: S-diacylglycerol cysteine.

The protein belongs to the BMP lipoprotein family. In terms of assembly, monomer.

The protein resides in the cell inner membrane. May be part of an ABC-type nucleoside uptake system involved in the purine salvage pathway. This chain is Basic membrane protein B (bmpB), found in Borreliella burgdorferi (strain ATCC 35210 / DSM 4680 / CIP 102532 / B31) (Borrelia burgdorferi).